Consider the following 163-residue polypeptide: Crossover junction endodeoxyribonuclease RuvC (163 aa).

Catalysis depends on residues Asp7, Glu67, and Asp140. Asp7, Glu67, and Asp140 together coordinate Mg(2+).

Belongs to the RuvC family. In terms of assembly, homodimer which binds Holliday junction (HJ) DNA. The HJ becomes 2-fold symmetrical on binding to RuvC with unstacked arms; it has a different conformation from HJ DNA in complex with RuvA. In the full resolvosome a probable DNA-RuvA(4)-RuvB(12)-RuvC(2) complex forms which resolves the HJ. Requires Mg(2+) as cofactor.

The protein localises to the cytoplasm. The enzyme catalyses Endonucleolytic cleavage at a junction such as a reciprocal single-stranded crossover between two homologous DNA duplexes (Holliday junction).. Its function is as follows. The RuvA-RuvB-RuvC complex processes Holliday junction (HJ) DNA during genetic recombination and DNA repair. Endonuclease that resolves HJ intermediates. Cleaves cruciform DNA by making single-stranded nicks across the HJ at symmetrical positions within the homologous arms, yielding a 5'-phosphate and a 3'-hydroxyl group; requires a central core of homology in the junction. The consensus cleavage sequence is 5'-(A/T)TT(C/G)-3'. Cleavage occurs on the 3'-side of the TT dinucleotide at the point of strand exchange. HJ branch migration catalyzed by RuvA-RuvB allows RuvC to scan DNA until it finds its consensus sequence, where it cleaves and resolves the cruciform DNA. The polypeptide is Crossover junction endodeoxyribonuclease RuvC (Desulforamulus reducens (strain ATCC BAA-1160 / DSM 100696 / MI-1) (Desulfotomaculum reducens)).